The sequence spans 155 residues: Ribosome maturation factor RimP (155 aa).

Belongs to the RimP family.

It is found in the cytoplasm. Its function is as follows. Required for maturation of 30S ribosomal subunits. This Prochlorococcus marinus (strain MIT 9312) protein is Ribosome maturation factor RimP.